Here is a 210-residue protein sequence, read N- to C-terminus: FMN-dependent NADH:quinone oxidoreductase (210 aa).

Residues 17-19 (SRS), 102-105 (MWNL), and 148-151 (SCGG) contribute to the FMN site.

This sequence belongs to the azoreductase type 1 family. As to quaternary structure, homodimer. FMN serves as cofactor.

It catalyses the reaction 2 a quinone + NADH + H(+) = 2 a 1,4-benzosemiquinone + NAD(+). It carries out the reaction N,N-dimethyl-1,4-phenylenediamine + anthranilate + 2 NAD(+) = 2-(4-dimethylaminophenyl)diazenylbenzoate + 2 NADH + 2 H(+). Quinone reductase that provides resistance to thiol-specific stress caused by electrophilic quinones. In terms of biological role, also exhibits azoreductase activity. Catalyzes the reductive cleavage of the azo bond in aromatic azo compounds to the corresponding amines. This chain is FMN-dependent NADH:quinone oxidoreductase, found in Trichlorobacter lovleyi (strain ATCC BAA-1151 / DSM 17278 / SZ) (Geobacter lovleyi).